The sequence spans 366 residues: Aminomethyltransferase (366 aa).

It belongs to the GcvT family. In terms of assembly, the glycine cleavage system is composed of four proteins: P, T, L and H.

It carries out the reaction N(6)-[(R)-S(8)-aminomethyldihydrolipoyl]-L-lysyl-[protein] + (6S)-5,6,7,8-tetrahydrofolate = N(6)-[(R)-dihydrolipoyl]-L-lysyl-[protein] + (6R)-5,10-methylene-5,6,7,8-tetrahydrofolate + NH4(+). Its function is as follows. The glycine cleavage system catalyzes the degradation of glycine. This is Aminomethyltransferase from Bordetella bronchiseptica (strain ATCC BAA-588 / NCTC 13252 / RB50) (Alcaligenes bronchisepticus).